Consider the following 331-residue polypeptide: GTPase Obg (331 aa).

The region spanning 1 to 159 is the Obg domain; it reads MQFIDQARIA…RELQLELKLL (159 aa). Residues 160–328 form the OBG-type G domain; the sequence is AEVGLVGLPN…LLQQVWQELG (169 aa). Residues 166 to 173, 191 to 195, 213 to 216, 280 to 283, and 309 to 311 each bind GTP; these read GLPNAGKS, FTTLV, DIPG, SKSE, and SAV. Mg(2+) contacts are provided by S173 and T193.

This sequence belongs to the TRAFAC class OBG-HflX-like GTPase superfamily. OBG GTPase family. In terms of assembly, monomer. The cofactor is Mg(2+).

The protein resides in the cytoplasm. An essential GTPase which binds GTP, GDP and possibly (p)ppGpp with moderate affinity, with high nucleotide exchange rates and a fairly low GTP hydrolysis rate. Plays a role in control of the cell cycle, stress response, ribosome biogenesis and in those bacteria that undergo differentiation, in morphogenesis control. The chain is GTPase Obg from Synechococcus sp. (strain RCC307).